The primary structure comprises 545 residues: Mediator of RNA polymerase II transcription subunit 17 (545 aa).

The disordered stretch occupies residues 148 to 168 (TVPPSSLQFSRSQPPESKESD). A compositionally biased stretch (polar residues) spans 149-162 (VPPSSLQFSRSQPP).

Belongs to the Mediator complex subunit 17 family. Component of the Mediator complex. Interacts with med18, prk1 and rbp1.

The protein resides in the nucleus. In terms of biological role, component of the Mediator complex, a coactivator involved in the regulated transcription of nearly all RNA polymerase II-dependent genes. Mediator functions as a bridge to convey information from gene-specific regulatory proteins to the basal RNA polymerase II transcription machinery. Mediator is recruited to promoters by direct interactions with regulatory proteins and serves as a scaffold for the assembly of a functional preinitiation complex with RNA polymerase II and the general transcription factors. This chain is Mediator of RNA polymerase II transcription subunit 17 (med17), found in Schizosaccharomyces pombe (strain 972 / ATCC 24843) (Fission yeast).